We begin with the raw amino-acid sequence, 254 residues long: MSPNIRPFIAGNWKMNGTVESLGELRAIAAGVSSDLGHLFEALICVPATLLSRASDALSGENLLLGGQNCHFDDCGPYTGDISAFMLKEAGASHVIIGHSERRTVYQESDAIVCAKVQAAWRAGLVALICVGETLEERTSNKVFNVLTRQLEGSLPDGATAENVIIAYEPVWAIGTGNSPTSAVVAEVHDFIRHKMCSRFGDDGRKMRLLYGGSVKPSNAFELLSTVHVNGALIGGASLKAIDFLTICDVYRKL.

12 to 14 (NWK) is a substrate binding site. The active-site Electrophile is histidine 99. The Proton acceptor role is filled by glutamate 169. Residues glycine 175, serine 214, and 235-236 (GG) each bind substrate.

This sequence belongs to the triosephosphate isomerase family. As to quaternary structure, homodimer.

The protein resides in the cytoplasm. The enzyme catalyses D-glyceraldehyde 3-phosphate = dihydroxyacetone phosphate. Its pathway is carbohydrate biosynthesis; gluconeogenesis. It functions in the pathway carbohydrate degradation; glycolysis; D-glyceraldehyde 3-phosphate from glycerone phosphate: step 1/1. Its function is as follows. Involved in the gluconeogenesis. Catalyzes stereospecifically the conversion of dihydroxyacetone phosphate (DHAP) to D-glyceraldehyde-3-phosphate (G3P). This chain is Triosephosphate isomerase, found in Bartonella quintana (strain Toulouse) (Rochalimaea quintana).